We begin with the raw amino-acid sequence, 359 residues long: F-box protein At1g10895 (359 aa).

Residues 2–48 (TTMSDLDEIMVAEILCRTPMTCLKTVRSVCKKWNALSKKWFFFGKAK) enclose the F-box domain.

The polypeptide is F-box protein At1g10895 (Arabidopsis thaliana (Mouse-ear cress)).